A 291-amino-acid chain; its full sequence is 11-beta-hydroxysteroid dehydrogenase 1 (291 aa).

Topologically, residues 1–7 are cytoplasmic; the sequence is MAFMKTH. A helical; Signal-anchor for type II membrane protein membrane pass occupies residues 8–24; the sequence is LLPILGLFMAYYYYSAY. The Lumenal portion of the chain corresponds to 25-291; that stretch reads EEFRPEMLQG…TSYSTDGLIN (267 aa). NADP(+)-binding positions include 41-67, 92-93, and 119-121; these read GASKGIGREMAYHLAKMGAHVVVTARS, TM, and NHI. N123 and N162 each carry an N-linked (GlcNAc...) asparagine glycan. Residue S170 participates in substrate binding. The active-site Proton acceptor is Y183. An NADP(+)-binding site is contributed by 183-187; that stretch reads YSASK. N207 carries N-linked (GlcNAc...) asparagine glycosylation. 218–222 lines the NADP(+) pocket; it reads IDTDT.

This sequence belongs to the short-chain dehydrogenases/reductases (SDR) family. As to quaternary structure, homodimer. In terms of tissue distribution, abundantly expressed in the liver, followed by fibroblasts, also detected in the brain, lung, heart, and ovary, and in smaller amounts in kidney, skin, and spleen.

It is found in the endoplasmic reticulum membrane. The enzyme catalyses an 11beta-hydroxysteroid + NADP(+) = an 11-oxosteroid + NADPH + H(+). It catalyses the reaction cortisone + NADPH + H(+) = cortisol + NADP(+). The catalysed reaction is corticosterone + NADP(+) = 11-dehydrocorticosterone + NADPH + H(+). It carries out the reaction a 7beta-hydroxysteroid + NADP(+) = a 7-oxosteroid + NADPH + H(+). The enzyme catalyses 7-oxocholesterol + NADPH + H(+) = 7beta-hydroxycholesterol + NADP(+). It catalyses the reaction chenodeoxycholate + NADP(+) = 7-oxolithocholate + NADPH + H(+). The catalysed reaction is 7-oxolithocholate + NADPH + H(+) = ursodeoxycholate + NADP(+). It carries out the reaction glycochenodeoxycholate + NADP(+) = 7-oxoglycolithocholate + NADPH + H(+). The enzyme catalyses taurochenodeoxycholate + NADP(+) = 7-oxotaurolithocholate + NADPH + H(+). It catalyses the reaction tauroursodeoxycholate + NADP(+) = 7-oxotaurolithocholate + NADPH + H(+). The catalysed reaction is glycoursodeoxycholate + NADP(+) = 7-oxoglycolithocholate + NADPH + H(+). It carries out the reaction 7-oxopregnenolone + NADPH + H(+) = 7beta-hydroxypregnenolone + NADP(+). The enzyme catalyses 3beta,7alpha-dihydroxyandrost-5-en-17-one + NADP(+) = 3beta-hydroxy-5-androstene-7,17-dione + NADPH + H(+). It catalyses the reaction 3beta-hydroxy-5-androstene-7,17-dione + NADPH + H(+) = 3beta,7beta-dihydroxyandrost-5-en-17-one + NADP(+). The catalysed reaction is 3beta-hydroxy-5alpha-androstane-7,17-dione + NADPH + H(+) = 3beta,7beta-dihydroxy-5alpha-androstan-17-one + NADP(+). The protein operates within steroid metabolism. In terms of biological role, controls the reversible conversion of biologically active glucocorticoids such as cortisone to cortisol, and 11-dehydrocorticosterone to corticosterone in the presence of NADP(H). Participates in the corticosteroid receptor-mediated anti-inflammatory response, as well as metabolic and homeostatic processes. Bidirectional in vitro, predominantly functions as a reductase in vivo, thereby increasing the concentration of active glucocorticoids. It has broad substrate specificity, besides glucocorticoids, it accepts other steroid and sterol substrates. Interconverts 7-oxo- and 7-hydroxy-neurosteroids such as 7-oxopregnenolone and 7beta-hydroxypregnenolone, 7-oxodehydroepiandrosterone (3beta-hydroxy-5-androstene-7,17-dione) and 7beta-hydroxydehydroepiandrosterone (3beta,7beta-dihydroxyandrost-5-en-17-one), among others. Catalyzes the stereo-specific conversion of the major dietary oxysterol, 7-ketocholesterol (7-oxocholesterol), into the more polar 7-beta-hydroxycholesterol metabolite. 7-oxocholesterol is one of the most important oxysterols, it participates in several events such as induction of apoptosis, accumulation in atherosclerotic lesions, lipid peroxidation, and induction of foam cell formation. Mediates the 7-oxo reduction of 7-oxolithocholate mainly to chenodeoxycholate, and to a lesser extent to ursodeoxycholate, both in its free form and when conjugated to glycine or taurine, providing a link between glucocorticoid activation and bile acid metabolism. Catalyzes the synthesis of 7-beta-25-dihydroxycholesterol from 7-oxo-25-hydroxycholesterol in vitro, which acts as a ligand for the G-protein-coupled receptor (GPCR) Epstein-Barr virus-induced gene 2 (EBI2) and may thereby regulate immune cell migration. This chain is 11-beta-hydroxysteroid dehydrogenase 1 (HSD11B1), found in Saimiri sciureus (Common squirrel monkey).